Here is a 252-residue protein sequence, read N- to C-terminus: tRNA (guanine-N(1)-)-methyltransferase (252 aa).

Residues Gly113 and 133-138 (IGDYVL) contribute to the S-adenosyl-L-methionine site.

The protein belongs to the RNA methyltransferase TrmD family. As to quaternary structure, homodimer.

The protein localises to the cytoplasm. It carries out the reaction guanosine(37) in tRNA + S-adenosyl-L-methionine = N(1)-methylguanosine(37) in tRNA + S-adenosyl-L-homocysteine + H(+). In terms of biological role, specifically methylates guanosine-37 in various tRNAs. This Xanthomonas campestris pv. campestris (strain 8004) protein is tRNA (guanine-N(1)-)-methyltransferase.